Consider the following 318-residue polypeptide: Cytochrome c biogenesis protein CcsA (318 aa).

Transmembrane regions (helical) follow at residues 17 to 37 (VLAL…ISFW), 45 to 65 (SAVV…QLVL), 75 to 95 (ISNL…AQLL), 104 to 124 (IVSA…SFAL), 149 to 169 (VIMC…AVLF), 224 to 244 (TITV…VWAN), 258 to 275 (TWAL…HTRF), and 287 to 307 (VAVA…LLGI).

Belongs to the CcmF/CycK/Ccl1/NrfE/CcsA family. As to quaternary structure, may interact with ccs1.

It localises to the cellular thylakoid membrane. Functionally, required during biogenesis of c-type cytochromes (cytochrome c6 and cytochrome f) at the step of heme attachment. This Prochlorococcus marinus (strain MIT 9303) protein is Cytochrome c biogenesis protein CcsA.